The primary structure comprises 94 residues: Co-chaperonin GroES (94 aa).

It belongs to the GroES chaperonin family. As to quaternary structure, heptamer of 7 subunits arranged in a ring. Interacts with the chaperonin GroEL.

It is found in the cytoplasm. Functionally, together with the chaperonin GroEL, plays an essential role in assisting protein folding. The GroEL-GroES system forms a nano-cage that allows encapsulation of the non-native substrate proteins and provides a physical environment optimized to promote and accelerate protein folding. GroES binds to the apical surface of the GroEL ring, thereby capping the opening of the GroEL channel. In Alkaliphilus oremlandii (strain OhILAs) (Clostridium oremlandii (strain OhILAs)), this protein is Co-chaperonin GroES.